We begin with the raw amino-acid sequence, 1406 residues long: Enhancer of mRNA-decapping protein 4 (1406 aa).

Ala2 carries the N-acetylalanine modification. Phosphoserine is present on residues Ser3 and Ser6. Residue Lys125 is modified to N6-acetyllysine. WD repeat units lie at residues 174–214 (GFTG…GKIQ), 230–277 (NHFR…SSHN), 295–334 (GHST…QDEP), and 342–393 (PHDG…CLQT). Residues Ser560, Ser565, Ser583, and Ser585 each carry the phosphoserine modification. 2 disordered regions span residues 604-631 (SLQQ…SSSS) and 667-686 (SLTL…SLLP). The span at 609-631 (SASPSSSSSSSSSSSSSSSSSSS) shows a compositional bias: low complexity. Residues Ser680, Ser712, Ser727, and Ser729 each carry the phosphoserine modification. Positions 719-744 (EPLGLPQASPSRTRSPDVISSASTAL) are disordered. A compositionally biased stretch (polar residues) spans 726–744 (ASPSRTRSPDVISSASTAL). The residue at position 731 (Thr731) is a Phosphothreonine. 2 positions are modified to phosphoserine: Ser733 and Ser745. 2 disordered regions span residues 782 to 855 (HLLS…NGLQ) and 873 to 951 (QRDS…VAEP). Composition is skewed to polar residues over residues 823-832 (EVATPDSQVW) and 841-852 (ETCSTLTESPRN). Thr826 bears the Phosphothreonine mark. Residues Ser849 and Ser876 each carry the phosphoserine modification. Thr879 is modified (phosphothreonine). Phosphoserine occurs at positions 880, 884, 892, 895, and 897. Residue Thr906 is modified to Phosphothreonine. A coiled-coil region spans residues 971-1030 (HNQEELLQRLCAQLEGLQSTVTDHVERALETRHEQEQRRLERALAEGQQRGGQLQEQLTQ). At Ser1385 the chain carries Phosphoserine.

The protein belongs to the WD repeat EDC4 family. Part of a decapping complex consisting of DCP1A, DCP2, EDC3, EDC4 and probably DDX6. Part of a complex consisting of DCP1A, EDC3, EDC4 and DDX6. Part of a complex consisting of DCP1B, EDC3, EDC4 and DDX6. Interacts with DCP2. Interacts with RC3H1. Interacts with NBDY. Interacts with Tex19.1 and, probably, Tex19.2. Interacts with LSM14A. Interacts with DDX6.

The protein resides in the cytoplasm. It localises to the P-body. Its subcellular location is the nucleus. Its function is as follows. In the process of mRNA degradation, seems to play a role in mRNA decapping. Component of a complex containing DCP2 and DCP1A which functions in decapping of ARE-containing mRNAs. Promotes complex formation between DCP1A and DCP2. Enhances the catalytic activity of DCP2 (in vitro). The polypeptide is Enhancer of mRNA-decapping protein 4 (Mus musculus (Mouse)).